Here is a 729-residue protein sequence, read N- to C-terminus: Circadian input-output histidine kinase CikA (729 aa).

The N-terminal domain stretch occupies residues 1–169 (MPQPIFDRIL…QVTTQIRQSL (169 aa)). Residues 170 to 314 (ELPELLKIAV…VEFLTHLSQH (145 aa)) form a GAF domain region. Residues 366-587 (TMSHELRTPL…TFTVGLPAIS (222 aa)) enclose the Histidine kinase domain. Histidine 369 carries the post-translational modification Phosphohistidine; by autocatalysis. The interval 613–729 (EGRIVLVSED…GLTSLATSAQ (117 aa)) is psR domain, binds KaiB.

This sequence in the N-terminal section; belongs to the phytochrome family. In terms of assembly, homodimer. Part of the circadian clock (KaiA, KaiB, KaiC, CikA, RpaA, SasA), the composition of which varies during the circadian cycle. KaiA and CikA compete for binding to KaiB(fs). The PsR domain binds the KaiB:KaiC CI complex but poorly to either protein alone. KaiA and CikA bind to the same region of the KaiB(fs) form and therefore compete.

The catalysed reaction is ATP + protein L-histidine = ADP + protein N-phospho-L-histidine.. In terms of biological role, functions in an input pathway to the Kai circadian clock. Senses oxidized quinones via its C-terminal pseudo-receiver domain, providing a link between cell metabolism and the clock. Affects the ratio of phosphorylated to unphosphorylated KaiC, binds quinones via its pseudo-receptor domain. Quinone-binding destabilizes the protein rapidly. Autophosphorylates, does not transfer the phosphate to its pseudo-receiver (PsR) domain. May play a role in cell division. Functionally, also functions in a two-component CikA/RpaA output pathway from the circadian clock, negatively regulating kaiBC expression independently of labA and of sasA. One of three clock output pathways. Dephosphorylates phospho-RpaA, enhanced by KaiB and KaiC, has only modest kinase activity on RpaA. This chain is Circadian input-output histidine kinase CikA, found in Thermosynechococcus vestitus (strain NIES-2133 / IAM M-273 / BP-1).